A 202-amino-acid polypeptide reads, in one-letter code: Ribosome maturation factor RimM (202 aa).

A PRC barrel domain is found at 121–202; sequence KDEYYWVDLI…CITVDWQPDY (82 aa).

It belongs to the RimM family. Binds ribosomal protein uS19.

The protein localises to the cytoplasm. Functionally, an accessory protein needed during the final step in the assembly of 30S ribosomal subunit, possibly for assembly of the head region. Essential for efficient processing of 16S rRNA. May be needed both before and after RbfA during the maturation of 16S rRNA. It has affinity for free ribosomal 30S subunits but not for 70S ribosomes. The chain is Ribosome maturation factor RimM from Polaromonas sp. (strain JS666 / ATCC BAA-500).